Here is a 7756-residue protein sequence, read N- to C-terminus: Linear gramicidin synthase subunit C (7756 aa).

Carrier domains follow at residues 977-1052 (EPRN…AALQ), 2042-2116 (APAT…ADSS), 3557-3632 (APRT…ASLL), 4621-4695 (APAT…TVTD), 6141-6216 (APRK…AGLL), and 7200-7274 (APET…GDSV). Residues S1012, S2077, S3592, S4656, S6176, and S7235 each carry the O-(pantetheine 4'-phosphoryl)serine modification.

The protein belongs to the ATP-dependent AMP-binding enzyme family. In terms of assembly, large multienzyme complex composed of 4 subunits; LgrA, LgrB, LgrC and LgrD. Pantetheine 4'-phosphate is required as a cofactor.

In terms of biological role, activates the 7th to 12th amino acids (Val, D-Val, Trp, D-Leu, Xaa and D-Leu) in linear gramicidin and catalyzes the formation of the peptide bond between them. This enzyme is also responsible for the epimerization of the 8th (D-Val), the 10th (D-Leu) and 12th (D-Leu) amino acids. The 11th (Xaa) amino acid is Trp in linear gramicidin A; Phe in linear gramicidin B and Tyr in linear gramicidin C. This Brevibacillus parabrevis protein is Linear gramicidin synthase subunit C (lgrC).